Reading from the N-terminus, the 203-residue chain is Endo-type membrane-bound lytic murein transglycosylase A (203 aa).

A signal peptide spans 1–15 (MKLRWFAFLIVLLAG). A lipid anchor (N-palmitoyl cysteine) is attached at C16. The S-diacylglycerol cysteine moiety is linked to residue C16.

The protein belongs to the transglycosylase Slt family.

The protein localises to the cell outer membrane. The catalysed reaction is Endolytic cleavage of the (1-&gt;4)-beta-glycosidic linkage between N-acetylmuramic acid (MurNAc) and N-acetylglucosamine (GlcNAc) residues in peptidoglycan with concomitant formation of a 1,6-anhydrobond in the MurNAc residue.. Its function is as follows. Murein-degrading enzyme. May play a role in recycling of muropeptides during cell elongation and/or cell division. Preferentially cleaves at a distance of more than two disaccharide units from the ends of the glycan chain. The polypeptide is Endo-type membrane-bound lytic murein transglycosylase A (Escherichia coli O127:H6 (strain E2348/69 / EPEC)).